We begin with the raw amino-acid sequence, 460 residues long: Argininosuccinate lyase (460 aa).

The protein belongs to the lyase 1 family. Argininosuccinate lyase subfamily.

It localises to the cytoplasm. It catalyses the reaction 2-(N(omega)-L-arginino)succinate = fumarate + L-arginine. Its pathway is amino-acid biosynthesis; L-arginine biosynthesis; L-arginine from L-ornithine and carbamoyl phosphate: step 3/3. The chain is Argininosuccinate lyase from Actinobacillus succinogenes (strain ATCC 55618 / DSM 22257 / CCUG 43843 / 130Z).